Reading from the N-terminus, the 148-residue chain is Large ribosomal subunit protein uL15 (148 aa).

Residues 12–52 (ERKNRKRVGRGGGSGWGGTSGKGHKGQNARSGGGVPAWFEG) form a disordered region. Residues 21 to 32 (RGGGSGWGGTSG) are compositionally biased toward gly residues.

The protein belongs to the universal ribosomal protein uL15 family. As to quaternary structure, part of the 50S ribosomal subunit.

Its function is as follows. Binds to the 23S rRNA. This is Large ribosomal subunit protein uL15 from Maridesulfovibrio salexigens (strain ATCC 14822 / DSM 2638 / NCIMB 8403 / VKM B-1763) (Desulfovibrio salexigens).